Consider the following 1025-residue polypeptide: Multidrug resistance protein MdtC (1025 aa).

Transmembrane regions (helical) follow at residues 3 to 23 (FFAL…AITL), 333 to 353 (EVEQ…FLFL), 360 to 380 (IIPA…MYLC), 387 to 407 (LSLM…IVVL), 431 to 451 (VGFT…PLLL), 463 to 483 (FAVT…TLTP), 528 to 548 (LVGV…ISIP), 853 to 873 (VILI…LYES), 875 to 895 (VHPL…LLAL), 897 to 917 (LFNA…IGIV), 953 to 973 (PIMM…LSGG), and 984 to 1004 (ITIV…TPVV).

The protein belongs to the resistance-nodulation-cell division (RND) (TC 2.A.6) family. MdtC subfamily. In terms of assembly, part of a tripartite efflux system composed of MdtA, MdtB and MdtC. MdtC forms a heteromultimer with MdtB.

The protein resides in the cell inner membrane. The MdtABC tripartite complex confers resistance against novobiocin and deoxycholate. This Escherichia fergusonii (strain ATCC 35469 / DSM 13698 / CCUG 18766 / IAM 14443 / JCM 21226 / LMG 7866 / NBRC 102419 / NCTC 12128 / CDC 0568-73) protein is Multidrug resistance protein MdtC.